A 318-amino-acid polypeptide reads, in one-letter code: UDP-N-acetylenolpyruvoylglucosamine reductase (318 aa).

The 167-residue stretch at Ile38–Gly204 folds into the FAD-binding PCMH-type domain. Arg182 is an active-site residue. The interval Ser212–Gly232 is disordered. Residues Leu213–Lys229 show a composition bias toward basic and acidic residues. Ser233 serves as the catalytic Proton donor. Glu310 is a catalytic residue.

This sequence belongs to the MurB family. The cofactor is FAD.

The protein localises to the cytoplasm. It carries out the reaction UDP-N-acetyl-alpha-D-muramate + NADP(+) = UDP-N-acetyl-3-O-(1-carboxyvinyl)-alpha-D-glucosamine + NADPH + H(+). The protein operates within cell wall biogenesis; peptidoglycan biosynthesis. Functionally, cell wall formation. The chain is UDP-N-acetylenolpyruvoylglucosamine reductase from Leptospira borgpetersenii serovar Hardjo-bovis (strain JB197).